The primary structure comprises 125 residues: Histone H2A (125 aa).

Positions 1–18 (MSGRGKGGKARAKAKSRS) are enriched in basic residues. Residues 1–21 (MSGRGKGGKARAKAKSRSSRA) form a disordered region. Serine 2 bears the N-acetylserine mark. At serine 2 the chain carries Phosphoserine. Position 104 is an N5-methylglutamine (glutamine 104).

It belongs to the histone H2A family. In terms of assembly, the nucleosome is a histone octamer containing two molecules each of H2A, H2B, H3 and H4 assembled in one H3-H4 heterotetramer and two H2A-H2B heterodimers. The octamer wraps approximately 147 bp of DNA.

It is found in the nucleus. It localises to the chromosome. Core component of nucleosome. Nucleosomes wrap and compact DNA into chromatin, limiting DNA accessibility to the cellular machineries which require DNA as a template. Histones thereby play a central role in transcription regulation, DNA repair, DNA replication and chromosomal stability. DNA accessibility is regulated via a complex set of post-translational modifications of histones, also called histone code, and nucleosome remodeling. The polypeptide is Histone H2A (Asterias rubens (Common European starfish)).